The sequence spans 141 residues: Nucleoside triphosphatase NudI (141 aa).

Positions Met1–Leu141 constitute a Nudix hydrolase domain. Residues Gly38–Gly59 carry the Nudix box motif.

Belongs to the Nudix hydrolase family. NudI subfamily. As to quaternary structure, monomer. Mg(2+) serves as cofactor.

It catalyses the reaction a ribonucleoside 5'-triphosphate + H2O = a ribonucleoside 5'-phosphate + diphosphate + H(+). It carries out the reaction a 2'-deoxyribonucleoside 5'-triphosphate + H2O = a 2'-deoxyribonucleoside 5'-phosphate + diphosphate + H(+). The enzyme catalyses dUTP + H2O = dUMP + diphosphate + H(+). The catalysed reaction is dTTP + H2O = dTMP + diphosphate + H(+). It catalyses the reaction dCTP + H2O = dCMP + diphosphate + H(+). Catalyzes the hydrolysis of nucleoside triphosphates, with a preference for pyrimidine deoxynucleoside triphosphates (dUTP, dTTP and dCTP). This Salmonella newport (strain SL254) protein is Nucleoside triphosphatase NudI.